Here is a 321-residue protein sequence, read N- to C-terminus: Protein translocase subunit SecF (321 aa).

The next 6 membrane-spanning stretches (helical) occupy residues 23–43 (VWLISGFAVLISFLGFFFSWT), 158–178 (LQTTLISLLVAFSCVAIYISI), 189–209 (LLALFHDVLIVCGVFSWLGII), 217–237 (LFAVALLTIAGYSVNDTVVVF), 258–280 (FAVSATLTRTLYTSGTTLLPLIA), and 290–312 (YWFAIALALGVVVGSWSSIALVP).

The protein belongs to the SecD/SecF family. SecF subfamily. Forms a complex with SecD. Part of the essential Sec protein translocation apparatus which comprises SecA, SecYEG and auxiliary proteins SecDF. Other proteins may also be involved.

The protein resides in the cell inner membrane. Its function is as follows. Part of the Sec protein translocase complex. Interacts with the SecYEG preprotein conducting channel. SecDF uses the proton motive force (PMF) to complete protein translocation after the ATP-dependent function of SecA. Functionally, probably participates in protein translocation into and across both the cytoplasmic and thylakoid membranes in cyanobacterial cells. The sequence is that of Protein translocase subunit SecF from Prochlorococcus marinus (strain SARG / CCMP1375 / SS120).